Reading from the N-terminus, the 294-residue chain is UPF0718 protein YcgR (294 aa).

8 helical membrane passes run 15-35 (ISIL…SGII), 54-74 (LAVL…CGII), 92-112 (AFML…YIAF), 117-137 (SVVF…GVIL), 174-194 (IDEF…AAAM), 215-235 (LVMM…AFIA), 247-267 (LIAF…MMLA), and 273-293 (FVFL…LLVK).

It belongs to the UPF0718 family.

The protein localises to the cell membrane. This Bacillus subtilis (strain 168) protein is UPF0718 protein YcgR (ycgR).